The chain runs to 506 residues: Histidine ammonia-lyase (506 aa).

Residues 143-145 (ASG) constitute a cross-link (5-imidazolinone (Ala-Gly)). Position 144 is a 2,3-didehydroalanine (Ser) (serine 144).

It belongs to the PAL/histidase family. Post-translationally, contains an active site 4-methylidene-imidazol-5-one (MIO), which is formed autocatalytically by cyclization and dehydration of residues Ala-Ser-Gly.

It is found in the cytoplasm. It carries out the reaction L-histidine = trans-urocanate + NH4(+). It participates in amino-acid degradation; L-histidine degradation into L-glutamate; N-formimidoyl-L-glutamate from L-histidine: step 1/3. The polypeptide is Histidine ammonia-lyase (Salmonella paratyphi B (strain ATCC BAA-1250 / SPB7)).